The sequence spans 372 residues: Putative isochorismate synthase MenF (372 aa).

Residue lysine 119 is the Proton acceptor of the active site. Residue glutamate 175 is the Proton donor of the active site. Mg(2+)-binding residues include glutamate 219 and glutamate 356.

Belongs to the isochorismate synthase family. The cofactor is Mg(2+).

The catalysed reaction is chorismate = isochorismate. The protein operates within quinol/quinone metabolism; 1,4-dihydroxy-2-naphthoate biosynthesis; 1,4-dihydroxy-2-naphthoate from chorismate: step 1/7. It participates in quinol/quinone metabolism; menaquinone biosynthesis. Catalyzes the conversion of chorismate to isochorismate. This chain is Putative isochorismate synthase MenF (menF), found in Mycobacterium tuberculosis (strain CDC 1551 / Oshkosh).